The following is a 212-amino-acid chain: Probable nicotinate-nucleotide adenylyltransferase (212 aa).

Belongs to the NadD family.

The catalysed reaction is nicotinate beta-D-ribonucleotide + ATP + H(+) = deamido-NAD(+) + diphosphate. Its pathway is cofactor biosynthesis; NAD(+) biosynthesis; deamido-NAD(+) from nicotinate D-ribonucleotide: step 1/1. Its function is as follows. Catalyzes the reversible adenylation of nicotinate mononucleotide (NaMN) to nicotinic acid adenine dinucleotide (NaAD). The sequence is that of Probable nicotinate-nucleotide adenylyltransferase from Chromobacterium violaceum (strain ATCC 12472 / DSM 30191 / JCM 1249 / CCUG 213 / NBRC 12614 / NCIMB 9131 / NCTC 9757 / MK).